The chain runs to 397 residues: Phosphoglycerate kinase (397 aa).

Substrate-binding positions include 21–23, Arg-36, 59–62, Arg-119, and Arg-156; these read DFN and HLGR. ATP-binding positions include Lys-207, Gly-295, Glu-326, and 353 to 356; that span reads GGDS.

The protein belongs to the phosphoglycerate kinase family. In terms of assembly, monomer.

The protein localises to the cytoplasm. It carries out the reaction (2R)-3-phosphoglycerate + ATP = (2R)-3-phospho-glyceroyl phosphate + ADP. It functions in the pathway carbohydrate degradation; glycolysis; pyruvate from D-glyceraldehyde 3-phosphate: step 2/5. In Enterococcus faecalis (strain ATCC 700802 / V583), this protein is Phosphoglycerate kinase.